Consider the following 430-residue polypeptide: Adenylosuccinate synthetase (430 aa).

Residues 12–18 (GDEGKGK) and 40–42 (GHT) each bind GTP. Asp13 (proton acceptor) is an active-site residue. Mg(2+) is bound by residues Asp13 and Gly40. Residues 13-16 (DEGK), 38-41 (NAGH), Thr130, Arg144, Gln224, Thr239, and Arg303 contribute to the IMP site. His41 (proton donor) is an active-site residue. 299 to 305 (TVTGRKR) is a substrate binding site. Residues Arg305, 331–333 (KLD), and 413–415 (STS) each bind GTP.

It belongs to the adenylosuccinate synthetase family. Homodimer. Mg(2+) serves as cofactor.

It localises to the cytoplasm. It catalyses the reaction IMP + L-aspartate + GTP = N(6)-(1,2-dicarboxyethyl)-AMP + GDP + phosphate + 2 H(+). Its pathway is purine metabolism; AMP biosynthesis via de novo pathway; AMP from IMP: step 1/2. Its function is as follows. Plays an important role in the de novo pathway of purine nucleotide biosynthesis. Catalyzes the first committed step in the biosynthesis of AMP from IMP. The sequence is that of Adenylosuccinate synthetase from Cereibacter sphaeroides (strain ATCC 17029 / ATH 2.4.9) (Rhodobacter sphaeroides).